A 533-amino-acid chain; its full sequence is Beta-glucosidase 22 (533 aa).

The signal sequence occupies residues 1-24 (MAVSSSTSTCSSFSLLLLLLLLAA). N-linked (GlcNAc...) asparagine glycosylation occurs at Asn41. A beta-D-glucoside is bound by residues Gln61, His161, and 206–207 (DE). Glu207 (proton donor) is an active-site residue. An intrachain disulfide couples Cys226 to Cys234. N-linked (GlcNAc...) asparagine glycans are attached at residues Asn233 and Asn238. Positions 350 and 421 each coordinate a beta-D-glucoside. Glu421 serves as the catalytic Nucleophile. Asn435 carries N-linked (GlcNAc...) asparagine glycosylation. A beta-D-glucoside-binding residues include Trp466 and Phe482.

The protein belongs to the glycosyl hydrolase 1 family.

It carries out the reaction Hydrolysis of terminal, non-reducing beta-D-glucosyl residues with release of beta-D-glucose.. In Oryza sativa subsp. japonica (Rice), this protein is Beta-glucosidase 22 (BGLU22).